Consider the following 264-residue polypeptide: Glutamate 5-kinase (264 aa).

Residue Lys-15 participates in ATP binding. Substrate-binding residues include Ser-55, Asp-142, and Asn-154. ATP is bound by residues 174–175 (SD) and 216–222 (TGGIATK).

Belongs to the glutamate 5-kinase family.

Its subcellular location is the cytoplasm. It carries out the reaction L-glutamate + ATP = L-glutamyl 5-phosphate + ADP. The protein operates within amino-acid biosynthesis; L-proline biosynthesis; L-glutamate 5-semialdehyde from L-glutamate: step 1/2. Its function is as follows. Catalyzes the transfer of a phosphate group to glutamate to form L-glutamate 5-phosphate. This Alkaliphilus metalliredigens (strain QYMF) protein is Glutamate 5-kinase.